A 127-amino-acid chain; its full sequence is MRYGEKEIKEFDVENMEIWPNDAKNDYIIKITLPEFMCCCPRSGYPDFATIYLEYMPDKFVVELKAIKLYINTFMYRNVSHEASINEIYNTLKDKLKPKWIKVVGDFNPRGNVHTVIECRSDMVVPK.

Cys-40 serves as the catalytic Thioimide intermediate. Residue Asp-47 is the Proton donor of the active site. Substrate-binding positions include 62–64 (VEL) and 81–82 (HE).

The protein belongs to the GTP cyclohydrolase I family. QueF type 1 subfamily.

It is found in the cytoplasm. The catalysed reaction is 7-aminomethyl-7-carbaguanine + 2 NADP(+) = 7-cyano-7-deazaguanine + 2 NADPH + 3 H(+). It functions in the pathway tRNA modification; tRNA-queuosine biosynthesis. In terms of biological role, catalyzes the NADPH-dependent reduction of 7-cyano-7-deazaguanine (preQ0) to 7-aminomethyl-7-deazaguanine (preQ1). The sequence is that of NADPH-dependent 7-cyano-7-deazaguanine reductase from Campylobacter jejuni subsp. jejuni serotype O:2 (strain ATCC 700819 / NCTC 11168).